The sequence spans 101 residues: Cell division protein FtsB (101 aa).

The Cytoplasmic segment spans residues 1–3 (MRI). The chain crosses the membrane as a helical span at residues 4-21 (VIYSMLVLLIAIQYPLWL). At 22 to 101 (GKGGWLKVYE…KSSDTQVTKQ (80 aa)) the chain is on the periplasmic side. The stretch at 33–53 (ERQVELQEAKNSLLALRNAKL) forms a coiled coil.

Belongs to the FtsB family. Part of a complex composed of FtsB, FtsL and FtsQ.

Its subcellular location is the cell inner membrane. Functionally, essential cell division protein. May link together the upstream cell division proteins, which are predominantly cytoplasmic, with the downstream cell division proteins, which are predominantly periplasmic. The polypeptide is Cell division protein FtsB (Polynucleobacter necessarius subsp. necessarius (strain STIR1)).